The primary structure comprises 421 residues: Acyl-coenzyme A thioesterase 1 (421 aa).

Residues S232, D326, and H360 each act as charge relay system in the active site.

Belongs to the C/M/P thioester hydrolase family. As to quaternary structure, monomer.

Its subcellular location is the cytoplasm. It localises to the cytosol. It catalyses the reaction hexadecanoyl-CoA + H2O = hexadecanoate + CoA + H(+). The enzyme catalyses decanoyl-CoA + H2O = decanoate + CoA + H(+). It carries out the reaction dodecanoyl-CoA + H2O = dodecanoate + CoA + H(+). The catalysed reaction is tetradecanoyl-CoA + H2O = tetradecanoate + CoA + H(+). It catalyses the reaction octadecanoyl-CoA + H2O = octadecanoate + CoA + H(+). The enzyme catalyses eicosanoyl-CoA + H2O = eicosanoate + CoA + H(+). It carries out the reaction (9Z)-octadecenoyl-CoA + H2O = (9Z)-octadecenoate + CoA + H(+). The catalysed reaction is (9Z)-hexadecenoyl-CoA + H2O = (9Z)-hexadecenoate + CoA + H(+). It catalyses the reaction (9E)-octadecenoyl-CoA + H2O = (9E)-octadecenoate + CoA + H(+). Its pathway is lipid metabolism; fatty acid metabolism. In terms of biological role, catalyzes the hydrolysis of acyl-CoAs into free fatty acids and coenzyme A (CoASH), regulating their respective intracellular levels. More active towards saturated and unsaturated long chain fatty acyl-CoAs (C12-C20). The protein is Acyl-coenzyme A thioesterase 1 (ACOT1) of Homo sapiens (Human).